A 180-amino-acid polypeptide reads, in one-letter code: Adenosine 5'-phosphosulfate reductase (180 aa).

Residues Cys-57, Cys-58, Cys-140, and Cys-143 each coordinate [4Fe-4S] cluster. Cys-168 functions as the Nucleophile; cysteine thiosulfonate intermediate in the catalytic mechanism.

It belongs to the PAPS reductase family. CysH subfamily. Requires [4Fe-4S] cluster as cofactor.

It localises to the cytoplasm. It carries out the reaction [thioredoxin]-disulfide + sulfite + AMP + 2 H(+) = adenosine 5'-phosphosulfate + [thioredoxin]-dithiol. It functions in the pathway sulfur metabolism; hydrogen sulfide biosynthesis; sulfite from sulfate. In terms of biological role, catalyzes the formation of sulfite from adenosine 5'-phosphosulfate (APS) using thioredoxin as an electron donor. The protein is Adenosine 5'-phosphosulfate reductase of Rhizobium tropici.